The primary structure comprises 114 residues: uncharacterized protein (114 aa).

A helical membrane pass occupies residues 7-27 (YIFSFWFFFLVEYVVTFRLFL). A disordered region spans residues 90–114 (KNSPEKKKFKRGLPISSKYTDGKKR).

The protein resides in the membrane. This is an uncharacterized protein from Saccharomyces cerevisiae (strain ATCC 204508 / S288c) (Baker's yeast).